A 95-amino-acid polypeptide reads, in one-letter code: Small ribosomal subunit protein bS6 (95 aa).

This sequence belongs to the bacterial ribosomal protein bS6 family.

Binds together with bS18 to 16S ribosomal RNA. The chain is Small ribosomal subunit protein bS6 from Rhodococcus jostii (strain RHA1).